Reading from the N-terminus, the 310-residue chain is MKTVKILDSHTGGEPTRLVLEGFPDLGTGDMESRRKILSEQYDHFRRATMLEPRGNDVLVGALLCKPVNPKASAGVIFFNNTGYLGMCGHGTIGLVASLAHLGKIQVGTHLIETPVGDVEATLHEDHSVSVRNVPAYRYKKAVEVDVEKYGKVTGDIAWGGNWFFLINDHGQRVASDNLDQLTEYAWTVRQALTAQGITGKDGQEIDHIELFASDTEADSKNFVLCPGKAYDRSPCGTGTSAKIACLAADGKLEPGKLWKQASIIGSQFIASYEQAGEYVIPTIRGEAYMSAEATLFMDENDPFAWGIQL.

The active-site Proton acceptor is the C88. Residues 89-90, H208, and D232 each bind substrate; that span reads GH. C236 functions as the Proton donor in the catalytic mechanism. Substrate is bound at residue 237–238; that stretch reads GT.

It belongs to the proline racemase family.

The enzyme catalyses trans-4-hydroxy-L-proline = cis-4-hydroxy-D-proline. Functionally, catalyzes the epimerization of trans-4-hydroxy-L-proline (t4LHyp) to cis-4-hydroxy-D-proline (c4DHyp). Is likely involved in a degradation pathway that converts t4LHyp to alpha-ketoglutarate. Displays no proline racemase activity. In Acinetobacter baumannii (strain ATCC 17978 / DSM 105126 / CIP 53.77 / LMG 1025 / NCDC KC755 / 5377), this protein is 4-hydroxyproline 2-epimerase.